Here is a 356-residue protein sequence, read N- to C-terminus: Phenylalanine dehydrogenase (356 aa).

Residue Arg43 participates in NAD(+) binding. Position 67 (Lys67) interacts with L-phenylalanine. The active-site Proton donor/acceptor is the Lys79. 118-119 (PD) contacts L-phenylalanine. Residues Asp119, Ser150, Thr154, 183–189 (GLGAVGG), 206–207 (DT), Arg211, 240–241 (AM), and 261–263 (AAN) each bind NAD(+). L-phenylalanine is bound at residue Asn263.

Belongs to the Glu/Leu/Phe/Val dehydrogenases family. In terms of assembly, homotetramer, dimer of dimers.

The enzyme catalyses L-phenylalanine + NAD(+) + H2O = 3-phenylpyruvate + NH4(+) + NADH + H(+). The protein operates within amino-acid biosynthesis; L-phenylalanine biosynthesis; L-phenylalanine from phenylpyruvate (PDH route): step 1/1. With respect to regulation, subject to competitive inhibition by 3-phenylpropionate for the conversion of L-phenylalanine to phenylpyruvate. Subject to competitive inhibition by D-phenylalanine for the conversion of phenylpyruvate to L-phenylalanine. Catalyzes the reversible NAD(+)-dependent oxidative deamination of L-phenylalanine to phenylpyruvate. The protein is Phenylalanine dehydrogenase of Rhodococcus sp.